Here is an 840-residue protein sequence, read N- to C-terminus: Leucine--tRNA ligase (840 aa).

Positions P44 to H55 match the 'HIGH' region motif. The short motif at K617 to S621 is the 'KMSKS' region element. K620 is an ATP binding site.

This sequence belongs to the class-I aminoacyl-tRNA synthetase family.

It is found in the cytoplasm. The catalysed reaction is tRNA(Leu) + L-leucine + ATP = L-leucyl-tRNA(Leu) + AMP + diphosphate. This Borreliella burgdorferi (strain ZS7) (Borrelia burgdorferi) protein is Leucine--tRNA ligase.